The chain runs to 339 residues: MKDALVLQSRVPAHPDSRCWFLAWNPTGTLLASCGGDRKIRIWGTEGDSWICKSVLSEGHQRTVRKVAWSPCGNYLASASFDATTCIWKKNQDDFECVTTLEGHENEVKSVAWAPSGNLLATCSRDKSVWVWEVDEEDEYECVSVLNSHTQDVKHVVWHPSQELLASASYDDTVKLYQEEGDDWVCCATLEGHESTVWSIAFDPSGQRLASCSDDRTVRIWRQYLPGNEQGVACSGSDPSWKCVCTLSGFHTRTIYDVAWCQLTGALATACGDDAIRVFEEDPGSDPQQPTFSLTAHLRQAHSQDVNCVAWNPKEAGLLASCSDDGEVAFWEYHQPAGL.

7 WD repeats span residues 14 to 53 (HPDSRCWFLAWNPTGTLLASCGGDRKIRIWGTEGDSWICK), 59 to 98 (GHQRTVRKVAWSPCGNYLASASFDATTCIWKKNQDDFECV), 103 to 142 (GHENEVKSVAWAPSGNLLATCSRDKSVWVWEVDEEDEYEC), 148 to 187 (SHTQDVKHVVWHPSQELLASASYDDTVKLYQEEGDDWVCC), 192 to 231 (GHESTVWSIAFDPSGQRLASCSDDRTVRIWRQYLPGNEQG), 250 to 289 (FHTRTIYDVAWCQLTGALATACGDDAIRVFEEDPGSDPQQ), and 301 to 339 (AHSQDVNCVAWNPKEAGLLASCSDDGEVAFWEYHQPAGL). Positions 176–178 (LYQ) match the LYR motif; required for interaction with HSC20 motif.

Belongs to the WD repeat CIA1 family. As to quaternary structure, component of the CIA complex. Interacts with CIAO2A and forms a complex with CIAO2B and MMS19; the interactions with CIAO2A and CIAO2B are mutually exclusive. Interacts with CHD1L, ERCC2, IREB2 and POLD1. Component of the MMXD complex, which includes CIAO1, ERCC2, CIAO2B, MMS19 and SLC25A5. Interacts with WT1. Interacts with CIAO3. Interacts (via LYR motif) with HSC20.

Its subcellular location is the cytoplasm. Its function is as follows. Key component of the cytosolic iron-sulfur protein assembly (CIA) complex, a multiprotein complex that mediates the incorporation of iron-sulfur cluster into extramitochondrial Fe/S proteins. As a CIA complex component, interacts specifically with CIAO2A or CIAO2B and MMS19 to assist different branches of iron-sulfur protein assembly, depending of its interactors. The complex CIAO1:CIAO2B:MMS19 binds to and facilitates the assembly of most cytosolic-nuclear Fe/S proteins. CIAO1:CIAO2A specifically matures ACO1 and stabilizes IREB2. Seems to specifically modulate the transactivation activity of WT1. As part of the mitotic spindle-associated MMXD complex it may play a role in chromosome segregation. The sequence is that of Probable cytosolic iron-sulfur protein assembly protein CIAO1 from Rattus norvegicus (Rat).